The following is a 218-amino-acid chain: MKKPSLKYCGIHSLEDLKVTARSKADYLGFIFAESKRSVDPADVKRWCGETDTPGKKLVGVFVNENMSRMAEIVKDAGLDVIQLHGDETAADIKRLKSMTDCEIWKALPHGNDTVQSMASFAPYIDGYVIDSSVKGMRGGTGVSFSWDSVPLYIDAAQREGKRLFIAGGVNPDTIADLLKRRPPGIDLASGIEERGRKSEKLISLLEERMFEHVFISE.

The protein belongs to the TrpF family.

It catalyses the reaction N-(5-phospho-beta-D-ribosyl)anthranilate = 1-(2-carboxyphenylamino)-1-deoxy-D-ribulose 5-phosphate. It participates in amino-acid biosynthesis; L-tryptophan biosynthesis; L-tryptophan from chorismate: step 3/5. The protein is N-(5'-phosphoribosyl)anthranilate isomerase of Bacillus licheniformis (strain ATCC 14580 / DSM 13 / JCM 2505 / CCUG 7422 / NBRC 12200 / NCIMB 9375 / NCTC 10341 / NRRL NRS-1264 / Gibson 46).